Reading from the N-terminus, the 195-residue chain is Glycerol-3-phosphate acyltransferase (195 aa).

Helical transmembrane passes span 3-23 (FQVV…GFIL), 52-72 (LALL…AIAQ), 80-100 (ILFL…YLFF), 113-133 (LIFI…ICFL), and 147-167 (LIAL…IFAI).

This sequence belongs to the PlsY family. Probably interacts with PlsX.

The protein resides in the cell inner membrane. The enzyme catalyses an acyl phosphate + sn-glycerol 3-phosphate = a 1-acyl-sn-glycero-3-phosphate + phosphate. It participates in lipid metabolism; phospholipid metabolism. Its function is as follows. Catalyzes the transfer of an acyl group from acyl-phosphate (acyl-PO(4)) to glycerol-3-phosphate (G3P) to form lysophosphatidic acid (LPA). This enzyme utilizes acyl-phosphate as fatty acyl donor, but not acyl-CoA or acyl-ACP. In Ehrlichia ruminantium (strain Gardel), this protein is Glycerol-3-phosphate acyltransferase.